A 334-amino-acid polypeptide reads, in one-letter code: Pre-mRNA leakage protein 39 (334 aa).

As to quaternary structure, interacts with MLP1 and MLP2.

It is found in the nucleus membrane. Involved in the nuclear retention of improperly spliced pre-mRNAs. The polypeptide is Pre-mRNA leakage protein 39 (PML39) (Saccharomyces cerevisiae (strain ATCC 204508 / S288c) (Baker's yeast)).